The sequence spans 558 residues: MAKNRRDRNSWGGFSEKTYEWSSEEEEPVKKAGPVQVLVVKDDHSFELDETALNRILLSEAVRDKEVVAVSVAGAFRKGKSFLMDFMLRYMYNQESVDWVGDHNEPLTGFSWRGGSERETTGIQIWSEIFLINKPDGKKVAVLLMDTQGTFDSQSTLRDSATVFALSTMISSIQVYNLSQNVQEDDLQHLQLFTEYGRLAMEETFLKPFQSLIFLVRDWSFPYEFSYGSDGGSKFLEKRLKVSGNQHEELQNVRKHIHSCFTKISCFLLPHPGLKVATNPNFDGKLKEIDDEFIKNLKILIPWLLSPESLDIKEINGNKITCRGLVEYFKAYIKIYQGEELPHPKSMLQATAEANNLAAVATAKDTYNKKMEEICGGDKPFLAPNDLQTKHLELKEESVKLFRGVKKMGGEEFSRRYLQQLETEIDELYIQYIKHNDSKNIFHAARTPATLFVVIFITYVIAGVTGFIGLDIIASLCNMIMGLTLITLCTWAYIRYSGEYRELGAVIDQVAAALWDQGSTNEALYKLYSAAATHRHLYHQAFPAPKSESTEQSEKKKM.

Residues 1–28 (MAKNRRDRNSWGGFSEKTYEWSSEEEEP) form a disordered region. The interval 1-34 (MAKNRRDRNSWGGFSEKTYEWSSEEEEPVKKAGP) is N-terminal hypervariable region (HVR). At 1-449 (MAKNRRDRNS…NIFHAARTPA (449 aa)) the chain is on the cytoplasmic side. Ser10, Ser22, and Ser23 each carry phosphoserine. The region spanning 64–309 (DKEVVAVSVA…LIPWLLSPES (246 aa)) is the GB1/RHD3-type G domain. GDP contacts are provided by Arg77, Lys78, Gly79, Lys80, Ser81, Phe82, Gln148, Arg217, Asp218, Val276, and Asn279. Residues Arg77, Lys78, Gly79, Lys80, Ser81, and Phe82 each contribute to the GTP site. Residue Ser81 coordinates Mg(2+). Arg217, Asp218, and Val276 together coordinate GTP. Residues 347-438 (MLQATAEANN…YIQYIKHNDS (92 aa)) form a 3HB (three-helix bundle) domain region. Residue Lys395 is modified to N6-acetyllysine. The stretch at 418-439 (LQQLETEIDELYIQYIKHNDSK) forms a coiled coil. The interval 439 to 447 (KNIFHAART) is linker. A helical membrane pass occupies residues 450 to 470 (TLFVVIFITYVIAGVTGFIGL). Residue Asp471 is a topological domain, lumenal. Residues 472 to 492 (IIASLCNMIMGLTLITLCTWA) form a helical membrane-spanning segment. Residues 493–558 (YIRYSGEYRE…STEQSEKKKM (66 aa)) lie on the Cytoplasmic side of the membrane. The segment at 521-558 (NEALYKLYSAAATHRHLYHQAFPAPKSESTEQSEKKKM) is autoinhibitory domain.

This sequence belongs to the TRAFAC class dynamin-like GTPase superfamily. GB1/RHD3 GTPase family. GB1 subfamily. Monomeric and homodimeric. The homodimer, transiently formed by two molecules on opposing membranes, is the active form mediating ER membrane fusion. Interacts with REEP1, REEP5, RTN3 and RTN4 (via the transmembrane region); these proteins are involved in endoplasmic reticulum tubular network organization. Interacts with ZFYVE27; both proteins are involved in endoplasmic reticulum tubular network organization. Interacts with ARL6IP1; both proteins are involved in endoplasmic reticulum tubular network organization. Interacts with SPAST; the interaction is direct, could recruit SPAST to Golgi membranes. Interacts (via N-terminal region) with MAP4K4 (via CNH regulatory domain). May interact with TMED2. Interacts with CPT1C. In terms of processing, phosphorylated. Phosphorylation, by different kinases, of the N-terminal hypervariable region (HVR) regulates the ATL1-mediated membrane tethering step.

Its subcellular location is the endoplasmic reticulum membrane. The protein resides in the golgi apparatus membrane. The protein localises to the cell projection. It localises to the axon. The enzyme catalyses GTP + H2O = GDP + phosphate + H(+). Functionally, atlastin-1 (ATL1) is a membrane-anchored GTPase that mediates the GTP-dependent fusion of endoplasmic reticulum (ER) membranes, maintaining the continuous ER network. It facilitates the formation of three-way junctions where ER tubules intersect. Two atlastin-1 on neighboring ER tubules bind GTP and form loose homodimers through the GB1/RHD3-type G domains and 3HB regions. Upon GTP hydrolysis, the 3HB regions tighten, pulling the membranes together to drive their fusion. After fusion, the homodimer disassembles upon release of inorganic phosphate (Pi). Subsequently, GDP dissociates, resetting the monomers to a conformation ready for a new fusion cycle. May also regulate more or less directly Golgi biogenesis. Indirectly regulates axonal development. The polypeptide is Atlastin-1 (Bos taurus (Bovine)).